The primary structure comprises 240 residues: Biosynthetic peptidoglycan transglycosylase (240 aa).

The chain crosses the membrane as a helical span at residues 15–35 (WMFYLGAVVAIAWLATQAFYF).

This sequence belongs to the glycosyltransferase 51 family.

It is found in the cell inner membrane. The catalysed reaction is [GlcNAc-(1-&gt;4)-Mur2Ac(oyl-L-Ala-gamma-D-Glu-L-Lys-D-Ala-D-Ala)](n)-di-trans,octa-cis-undecaprenyl diphosphate + beta-D-GlcNAc-(1-&gt;4)-Mur2Ac(oyl-L-Ala-gamma-D-Glu-L-Lys-D-Ala-D-Ala)-di-trans,octa-cis-undecaprenyl diphosphate = [GlcNAc-(1-&gt;4)-Mur2Ac(oyl-L-Ala-gamma-D-Glu-L-Lys-D-Ala-D-Ala)](n+1)-di-trans,octa-cis-undecaprenyl diphosphate + di-trans,octa-cis-undecaprenyl diphosphate + H(+). Its pathway is cell wall biogenesis; peptidoglycan biosynthesis. In terms of biological role, peptidoglycan polymerase that catalyzes glycan chain elongation from lipid-linked precursors. The protein is Biosynthetic peptidoglycan transglycosylase of Paraburkholderia xenovorans (strain LB400).